The following is a 137-amino-acid chain: Nucleoside diphosphate kinase (137 aa).

Residues lysine 9, phenylalanine 57, arginine 85, threonine 91, arginine 102, and asparagine 112 each coordinate ATP. Histidine 115 serves as the catalytic Pros-phosphohistidine intermediate.

The protein belongs to the NDK family. In terms of assembly, homotetramer. Requires Mg(2+) as cofactor.

The protein resides in the cytoplasm. The enzyme catalyses a 2'-deoxyribonucleoside 5'-diphosphate + ATP = a 2'-deoxyribonucleoside 5'-triphosphate + ADP. It catalyses the reaction a ribonucleoside 5'-diphosphate + ATP = a ribonucleoside 5'-triphosphate + ADP. Major role in the synthesis of nucleoside triphosphates other than ATP. The ATP gamma phosphate is transferred to the NDP beta phosphate via a ping-pong mechanism, using a phosphorylated active-site intermediate. The chain is Nucleoside diphosphate kinase from Helicobacter hepaticus (strain ATCC 51449 / 3B1).